Consider the following 146-residue polypeptide: Leghemoglobin 1 (146 aa).

The Globin domain maps to 2–146 (GFTAQQDALV…LAAAIKKAMS (145 aa)). Phosphoserine; by CCAMK occurs at positions 13 and 14. Position 30 is a nitrated tyrosine (Tyr-30). Ser-45 and Ser-55 each carry phosphoserine; by CCAMK. Ser-45 lines the heme b pocket. His-61 is a binding site for O2. 3 residues coordinate heme b: Lys-64, His-93, and Lys-96. Ser-123 carries the phosphoserine; by CCAMK modification. Tyr-134 carries the nitrated tyrosine modification.

It belongs to the plant globin family. Monomer. Nitrated in effective nodules and particularly in hypoxic conditions; this mechanism may play a protective role in the symbiosis by buffering toxic peroxynitrite NO(2)(-). Nitration level decrease during nodule senescence. In terms of processing, phosphorylated by CCAMK at serine residues in a Ca(2+)-dependent manner; the phosphorylation at Ser-45 disrupts the molecular environment of its porphyrin ring oxygen binding pocket, thus leading to a reduced oxygen consumption and to the delivery of oxygen O(2) to symbiosomes. Specifically and strongly expressed in root nodules and at low levels in seedlings.

The protein resides in the cytoplasm. Its subcellular location is the cytosol. The protein localises to the nucleus. Its function is as follows. Leghemoglobin that reversibly binds oxygen O(2) through a pentacoordinated heme iron. In root nodules, facilitates the diffusion of oxygen to the bacteroids while preventing the bacterial nitrogenase from being inactivated by buffering dioxygen, nitric oxide and carbon monoxide, and promoting the formation of reactive oxygen species (ROS, e.g. H(2)O(2)). This role is essential for symbiotic nitrogen fixation (SNF). The chain is Leghemoglobin 1 from Lotus japonicus (Lotus corniculatus var. japonicus).